The primary structure comprises 111 residues: MMKHYVMPIHTSNGATVCTPDGFAMKQRIERLKRELRINRKINKIGSGYDRTHDGLKKGYMPNGTLYAANRRIVRTWRENNLERRKDKRGRRGIDERKRLKPRNSPHLNRH.

The disordered stretch occupies residues 82–111 (LERRKDKRGRRGIDERKRLKPRNSPHLNRH). A compositionally biased stretch (basic residues) spans 99–111 (RLKPRNSPHLNRH).

The chain is Protein 0.6B (0.6A) from Escherichia coli (Bacteriophage T7).